A 309-amino-acid chain; its full sequence is Ribonuclease Z (309 aa).

Zn(2+) contacts are provided by His63, His65, Asp67, His68, His145, Asp216, and His274. Residue Asp67 is the Proton acceptor of the active site.

It belongs to the RNase Z family. As to quaternary structure, homodimer. Zn(2+) is required as a cofactor.

The enzyme catalyses Endonucleolytic cleavage of RNA, removing extra 3' nucleotides from tRNA precursor, generating 3' termini of tRNAs. A 3'-hydroxy group is left at the tRNA terminus and a 5'-phosphoryl group is left at the trailer molecule.. Its function is as follows. Zinc phosphodiesterase, which displays some tRNA 3'-processing endonuclease activity. Probably involved in tRNA maturation, by removing a 3'-trailer from precursor tRNA. This Streptococcus uberis (strain ATCC BAA-854 / 0140J) protein is Ribonuclease Z.